A 473-amino-acid chain; its full sequence is Probable glycine dehydrogenase (decarboxylating) subunit 2 (473 aa).

A disordered region spans residues 1-40; the sequence is MEHYEQARYAPAEGETNEPLLSENDQTTVSVDPSLPDDLT. N6-(pyridoxal phosphate)lysine is present on Lys-270.

This sequence belongs to the GcvP family. C-terminal subunit subfamily. As to quaternary structure, the glycine cleavage system is composed of four proteins: P, T, L and H. In this organism, the P 'protein' is a heterodimer of two subunits. It depends on pyridoxal 5'-phosphate as a cofactor.

The enzyme catalyses N(6)-[(R)-lipoyl]-L-lysyl-[glycine-cleavage complex H protein] + glycine + H(+) = N(6)-[(R)-S(8)-aminomethyldihydrolipoyl]-L-lysyl-[glycine-cleavage complex H protein] + CO2. In terms of biological role, the glycine cleavage system catalyzes the degradation of glycine. The P protein binds the alpha-amino group of glycine through its pyridoxal phosphate cofactor; CO(2) is released and the remaining methylamine moiety is then transferred to the lipoamide cofactor of the H protein. The polypeptide is Probable glycine dehydrogenase (decarboxylating) subunit 2 (Halobacterium salinarum (strain ATCC 700922 / JCM 11081 / NRC-1) (Halobacterium halobium)).